A 248-amino-acid polypeptide reads, in one-letter code: B-box zinc finger protein 24 (248 aa).

The Zn(2+) site is built by Cys-5, Cys-8, Cys-28, His-33, Cys-57, Cys-60, Cys-80, and His-85. The segment at 5 to 47 (CDVCEKAPATVICCADEAALCPQCDIEIHAANKLASKHQRLHL) adopts a B box-type 1; atypical zinc-finger fold. The segment at 57 to 99 (CDICQEKAAFIFCVEDRALLCRDCDESIHVANSRSANHQRFLA) adopts a B box-type 2; atypical zinc-finger fold. The interval 115–148 (IEKNQPEPSNNQQKANQIPAKSTSQQQQQPSSAT) is disordered. Residues 120-130 (PEPSNNQQKAN) show a composition bias toward polar residues. Low complexity predominate over residues 131 to 148 (QIPAKSTSQQQQQPSSAT). Positions 226–229 (KKPR) match the Nuclear localization signal motif. Residues 236-248 (DDDEEHFIVPDLG) form an interaction with COP1 region.

Interacts with COP1 WD40 domain. Interacts with HY5 and HYH. Interacts with RCD1 and TRP4. Post-translationally, COP1-mediated ubiquitination and subsequent proteasomal degradation of BBX24/STO occurs in the dark. In terms of tissue distribution, high expression in leaves and lower in roots and flowers.

It localises to the nucleus. Its function is as follows. Acts as a negative regulator of seedling photomorphogenesis and light-regulated inhibition of hypocotyl elongation. BBX24/STO and BBX25/STH function as transcriptional corepressors of HY5 activity, leading to the down-regulation of BBX22 expression. BBX24/STO acts additively with BBX25/STH during de-etiolation and the hypocotyl shade avoidance response. Functions as a negative regulator of photomorphogenic UV-B responses by interacting with both COP1 and HY5. May act as a transcription factor in the salt-stress response. This chain is B-box zinc finger protein 24, found in Arabidopsis thaliana (Mouse-ear cress).